Here is a 462-residue protein sequence, read N- to C-terminus: Stabilizer of axonemal microtubules 1 (462 aa).

12 mn regions span residues 30–64 (KPCFFSEYTEKYPTYLSYVPRESFKPKLEYQKVNI), 65–97 (PMEGLSTTKRDFGTFNIVPVKHHLPEKATPIQD), 98–131 (EMDFLTTYNQHYNYCPANRVNPIKPRDNKHQCND), 132–165 (KMECVPTYKADYLPWNQQKRSSIRPPQSYRPASC), 166–199 (RFDHRTTHQDDYPIKNPVDTVSYKPPHGPKLCNI), 200–232 (PLESMTSYKSSYVAHPMEKRCVYEGEKYKPSEV), 233–266 (PFDSLTTHKDSYRGLIGEPAKTWKPAPNHPGLDI), 267–299 (PFPSNTEFREKFQPWPTPKIVPKESIAYIPPEG), 300–332 (KMDLLTTVQADYKCPNGVPAQSCRPVIHLKKSD), 333–366 (RFESSTTNREDFKHWANIRREPVKPNHQLKFSDE), 367–400 (PMEYMTTNRAHYVPHAPANTKSCKPTWSGPRVNI), and 401–434 (PLEGQTTYSTSFTPKEIQRCPASYPEPPGYIFDE).

This sequence belongs to the FAM154 family. Associates with microtubules via the Mn regions.

Its subcellular location is the cytoplasm. It is found in the cytoskeleton. It localises to the microtubule organizing center. The protein localises to the centrosome. The protein resides in the centriole. Its subcellular location is the cilium basal body. It is found in the cilium axoneme. In terms of biological role, may play a role in the regulation of cilium length. Stabilizes microtubules at low temperature. In Rattus norvegicus (Rat), this protein is Stabilizer of axonemal microtubules 1 (Saxo1).